Here is a 348-residue protein sequence, read N- to C-terminus: tRNA N6-adenosine threonylcarbamoyltransferase (348 aa).

The Fe cation site is built by histidine 114 and histidine 118. Substrate-binding positions include 137 to 141 (LVSGG), aspartate 171, glycine 184, aspartate 188, and asparagine 283. Position 311 (aspartate 311) interacts with Fe cation.

Belongs to the KAE1 / TsaD family. Requires Fe(2+) as cofactor.

The protein localises to the cytoplasm. The enzyme catalyses L-threonylcarbamoyladenylate + adenosine(37) in tRNA = N(6)-L-threonylcarbamoyladenosine(37) in tRNA + AMP + H(+). Required for the formation of a threonylcarbamoyl group on adenosine at position 37 (t(6)A37) in tRNAs that read codons beginning with adenine. Is involved in the transfer of the threonylcarbamoyl moiety of threonylcarbamoyl-AMP (TC-AMP) to the N6 group of A37, together with TsaE and TsaB. TsaD likely plays a direct catalytic role in this reaction. This Nocardioides sp. (strain ATCC BAA-499 / JS614) protein is tRNA N6-adenosine threonylcarbamoyltransferase.